The following is a 617-amino-acid chain: Acetolactate synthase large subunit (617 aa).

A thiamine diphosphate-binding site is contributed by glutamate 71. FAD contacts are provided by residues arginine 173, 281-302 (HGTAYANFAVTECDLLIAVGAR), and 324-343 (EIDPAEIGKNRKADVAVLGD). Positions 413 to 492 (QHQMWAAQHL…VKVVIVNNHW (80 aa)) are thiamine pyrophosphate binding. Positions 463 and 490 each coordinate Mg(2+).

It belongs to the TPP enzyme family. Dimer of large and small chains. Mg(2+) is required as a cofactor. Requires thiamine diphosphate as cofactor.

The catalysed reaction is 2 pyruvate + H(+) = (2S)-2-acetolactate + CO2. Its pathway is amino-acid biosynthesis; L-isoleucine biosynthesis; L-isoleucine from 2-oxobutanoate: step 1/4. It participates in amino-acid biosynthesis; L-valine biosynthesis; L-valine from pyruvate: step 1/4. In Parasynechococcus marenigrum (strain WH8102), this protein is Acetolactate synthase large subunit (ilvB).